Consider the following 114-residue polypeptide: Iron-sulfur cluster insertion protein ErpA (114 aa).

Iron-sulfur cluster-binding residues include C42, C106, and C108.

This sequence belongs to the HesB/IscA family. In terms of assembly, homodimer. Iron-sulfur cluster is required as a cofactor.

Required for insertion of 4Fe-4S clusters for at least IspG. The sequence is that of Iron-sulfur cluster insertion protein ErpA from Pseudoalteromonas atlantica (strain T6c / ATCC BAA-1087).